The following is a 441-amino-acid chain: MFS-type transporter (441 aa).

The segment at 1-47 (MPPQQEQDTDSDAIRSYNEESKSETPGCIPDAMLSSDETSNDVASDI) is disordered. The next 10 helical transmembrane spans lie at 61 to 81 (TLCGHFLFMNTWGFINSFGIF), 95 to 115 (DISWIGSIQVFLSFFVGAFVG), 125 to 145 (LVLSCGTILVLIGIFTASLST), 150 to 170 (LILSQGICCGLGNGFLVTPAV), 183 to 203 (LAIGISTCGSVTGALVFNSMA), 212 to 232 (FGWTMRAIGFVQAATLLFVVV), 259 to 279 (FFTIGMFFNFWAVFFGYYYIA), 289 to 309 (TLTYTQSLNLLLILNGVGVFG), 323 to 343 (LELLIPTCLVAAVATFSWIAV), and 351 to 371 (VWTVFYGIIGGSILSLFPAGI). A glycan (N-linked (GlcNAc...) asparagine) is linked at Asn-388. A run of 2 helical transmembrane segments spans residues 389–409 (FTVISFATLTGNPIAGAIITA) and 415–435 (YGAQAFMGSSFIVGTAFIVAA).

It belongs to the major facilitator superfamily. Monocarboxylate porter (TC 2.A.1.13) family.

The protein localises to the membrane. Its function is as follows. MFS-type transporter; part of the gene cluster that mediates the biosynthesis of butenolide, a mycotoxin that shows antibiotic activity but does not seem to play a major role in the spread of head blight in wheat. The chain is MFS-type transporter from Gibberella zeae (strain ATCC MYA-4620 / CBS 123657 / FGSC 9075 / NRRL 31084 / PH-1) (Wheat head blight fungus).